We begin with the raw amino-acid sequence, 342 residues long: Vancomycin B-type resistance protein VanB (342 aa).

Residues K132, 168 to 170 (FVK), 176 to 177 (SS), 206 to 213 (EQAISGCE), and F240 each bind ATP. The region spanning 136 to 337 (YILTKNAGIA…LPALIDSLIT (202 aa)) is the ATP-grasp domain. H243 provides a ligand contact to substrate. 303–304 (NE) contacts ATP. E304 and N306 together coordinate Mg(2+).

It belongs to the D-alanine--D-alanine ligase family. Mg(2+) serves as cofactor. Requires Mn(2+) as cofactor.

The protein resides in the cell membrane. It carries out the reaction (R)-lactate + D-alanine + ATP = D-alanyl-(R)-lactate + ADP + phosphate. Functionally, required for high-level resistance to glycopeptides antibiotics. D-Ala--D-Ala ligase of altered specificity which catalyzes ester bond formation between D-Ala and various D-hydroxy acids; producing a peptidoglycan which does not terminate in D-alanine but in D-lactate, thus preventing vancomycin binding. The polypeptide is Vancomycin B-type resistance protein VanB (vanB) (Enterococcus faecalis (strain ATCC 700802 / V583)).